The chain runs to 256 residues: Major prion protein (256 aa).

Residues 1 to 24 (MVKSHIGSWILVLFVAMWSDVGLC) form the signal peptide. The segment at 25–233 (KKRPKPGGGW…ESQAYYQRGA (209 aa)) is interaction with GRB2, ERI3 and SYN1. The disordered stretch occupies residues 28-110 (PKPGGGWNTG…QWNKPSKPKT (83 aa)). Repeat copies occupy residues 54–62 (PQGGGGWGQ), 63–70 (PHGGGWGQ), 71–78 (PHGGGWGQ), 79–86 (PHGGGWGQ), and 87–95 (PHGGGGWGQ). Residues 54–95 (PQGGGGWGQPHGGGWGQPHGGGWGQPHGGGWGQPHGGGGWGQ) are 5 X 8 AA tandem repeats of P-H-G-G-G-W-G-Q. The span at 55 to 97 (QGGGGWGQPHGGGWGQPHGGGWGQPHGGGWGQPHGGGGWGQGG) shows a compositional bias: gly residues. Positions 64, 65, 66, 72, 73, 74, 80, 81, 82, 88, 90, and 91 each coordinate Cu(2+). A disulfide bridge links cysteine 182 with cysteine 217. N-linked (GlcNAc...) asparagine glycans are attached at residues asparagine 184 and asparagine 200. Alanine 233 carries the GPI-anchor amidated alanine lipid modification. Residues 234–256 (SVILFSPPPVILLISFLIFLIVG) constitute a propeptide, removed in mature form.

Belongs to the prion family. In terms of assembly, monomer and homodimer. Has a tendency to aggregate into amyloid fibrils containing a cross-beta spine, formed by a steric zipper of superposed beta-strands. Soluble oligomers may represent an intermediate stage on the path to fibril formation. Copper binding may promote oligomerization. Interacts with GRB2, APP, ERI3/PRNPIP and SYN1. Mislocalized cytosolically exposed PrP interacts with MGRN1; this interaction alters MGRN1 subcellular location and causes lysosomal enlargement. Interacts with KIAA1191.

The protein localises to the cell membrane. Its subcellular location is the golgi apparatus. Its primary physiological function is unclear. Has cytoprotective activity against internal or environmental stresses. May play a role in neuronal development and synaptic plasticity. May be required for neuronal myelin sheath maintenance. May play a role in iron uptake and iron homeostasis. Soluble oligomers are toxic to cultured neuroblastoma cells and induce apoptosis (in vitro). Association with GPC1 (via its heparan sulfate chains) targets PRNP to lipid rafts. Also provides Cu(2+) or Zn(2+) for the ascorbate-mediated GPC1 deaminase degradation of its heparan sulfate side chains. The chain is Major prion protein (PRNP) from Capra hircus (Goat).